The following is a 189-amino-acid chain: UPF0312 protein VC_A0539 (189 aa).

The first 22 residues, 1–22 (MKKTLMAVGLAAVMSIPFAANA), serve as a signal peptide directing secretion.

The protein belongs to the UPF0312 family. Type 1 subfamily.

It localises to the periplasm. This is UPF0312 protein VC_A0539 from Vibrio cholerae serotype O1 (strain ATCC 39315 / El Tor Inaba N16961).